Reading from the N-terminus, the 440-residue chain is SET domain-containing protein 4 (440 aa).

Positions 1–16 are enriched in basic residues; sequence MQKGKGRTSRIRRRKL. The disordered stretch occupies residues 1 to 24; it reads MQKGKGRTSRIRRRKLCGSSESRG. The region spanning 48 to 273 is the SET domain; sequence SNLAPACFPG…KHEEVFICYG (226 aa). Y272 provides a ligand contact to S-adenosyl-L-methionine.

The protein belongs to the class V-like SAM-binding methyltransferase superfamily. SETD4 family. As to quaternary structure, forms a ternary complex with TBK1 and ZNF268; the interaction with TBK1 is ZNF268-dependent and leads to TBK1 monomethylation.

Its subcellular location is the cytoplasm. It is found in the cytosol. It localises to the nucleus. The enzyme catalyses L-lysyl(4)-[histone H3] + S-adenosyl-L-methionine = N(6)-methyl-L-lysyl(4)-[histone H3] + S-adenosyl-L-homocysteine + H(+). It carries out the reaction N(6)-methyl-L-lysyl(4)-[histone H3] + S-adenosyl-L-methionine = N(6),N(6)-dimethyl-L-lysyl(4)-[histone H3] + S-adenosyl-L-homocysteine + H(+). It catalyses the reaction L-lysyl(20)-[histone H4] + S-adenosyl-L-methionine = N(6)-methyl-L-lysyl(20)-[histone H4] + S-adenosyl-L-homocysteine + H(+). The catalysed reaction is N(6)-methyl-L-lysyl(20)-[histone H4] + S-adenosyl-L-methionine = N(6),N(6)-dimethyl-L-lysyl(20)-[histone H4] + S-adenosyl-L-homocysteine + H(+). The enzyme catalyses N(6),N(6)-dimethyl-L-lysyl(20)-[histone H4] + S-adenosyl-L-methionine = N(6),N(6),N(6)-trimethyl-L-lysyl(20)-[histone H4] + S-adenosyl-L-homocysteine + H(+). It carries out the reaction L-lysyl-[protein] + S-adenosyl-L-methionine = N(6)-methyl-L-lysyl-[protein] + S-adenosyl-L-homocysteine + H(+). Protein-lysine N-methyltransferase that methylates both histones and non-histone proteins. Via its catalytic activity, regulates many processes, including cell proliferation, cell differentiation, inflammatory response and apoptosis. Regulates the inflammatory response by mediating mono- and dimethylation of 'Lys-4' of histone H3 (H3K4me1 and H3K4me2, respectively), leading to activate the transcription of pro-inflammatory cytokines IL6 and TNF-alpha. Through the catalysis of TBK1 monomethylation, may regulate virus-induced interferon signaling. TBK1 monomethylation enhances its interaction with MAVS, STING and IRF3, hence promoting antiviral interferon signaling. Also involved in the regulation of stem cell quiescence by catalyzing the trimethylation of 'Lys-20' of histone H4 (H4K20me3), thereby promoting heterochromatin formation. In the brain, epigenetically controls quiescence of neural stem cells for sustaining a protected neural stem cell population and maintaining a stem cell reservoir for neurogenesis. Involved in proliferation, migration, paracrine and myogenic differentiation of bone marrow mesenchymal stem cells (BMSCs). Through the catalysis of XRCC5/Ku70 trimethylation, regulates BAX-mediated apoptosis. SETD4-catalyzed XRCC5 methylation results in XRCC5 translocation to the cytoplasm, where it interacts with BAX, sequestering it from the mitochondria, hence preventing BAX-mediated apoptosis. This Homo sapiens (Human) protein is SET domain-containing protein 4.